Here is a 507-residue protein sequence, read N- to C-terminus: Efflux pump ustT (507 aa).

The next 11 helical transmembrane spans lie at 59-79, 146-166, 180-200, 216-236, 240-260, 316-336, 359-379, 398-418, 421-441, 449-469, and 481-501; these read IAVV…IIVA, LLIA…VTWF, IWQL…AMIA, HAAV…LANF, IPVF…YVVV, VLLI…SGIT, AGVN…ILVK, VCLI…TLVF, TVFA…TGMV, VFTG…PMLA, and IWVG…LGAI.

It belongs to the major facilitator superfamily.

The protein localises to the cell membrane. Its pathway is mycotoxin biosynthesis. Functionally, efflux pump; part of the gene cluster that mediates the biosynthesis of the secondary metabolite ustiloxin B, an antimitotic tetrapeptide. Probably involved in self-resistance through the export of ustiloxin B. This is Efflux pump ustT from Aspergillus flavus (strain ATCC 200026 / FGSC A1120 / IAM 13836 / NRRL 3357 / JCM 12722 / SRRC 167).